We begin with the raw amino-acid sequence, 286 residues long: Short-chain dehydrogenase fogD (286 aa).

Residues valine 8, threonine 34, aspartate 55, tyrosine 147, lysine 151, valine 180, and threonine 182 each contribute to the NADP(+) site. Tyrosine 147 (proton acceptor) is an active-site residue. The active-site Lowers pKa of active site Tyr is the lysine 151.

The protein belongs to the short-chain dehydrogenases/reductases (SDR) family.

Its pathway is secondary metabolite biosynthesis. Functionally, short-chain dehydrogenase; part of the gene cluster that mediates the biosynthesis of flavoglaucin and congeners (including aspergin, dihydroauroglaucin and auroglaucin), prenylated salicylaldehyde derivatives carrying a saturated or an unsaturated C-7 side chain. The PKS fogA releases the carboxylic acid (8E,10E,12E)-3,5,7-trihydroxytetradeca-8,10,12-trienoic acid as its product, as well as derivatives with one and two double bonds. FogA is indeed able to reduce the initial triketide, thus being at least partially responsible for the differently saturated heptyl side chains of flavoglaucin congeners. The oxidoreductases fogB, fogC and fogD modify the nascent polyketide in fogA-bound form and, together, fogA, fogB, fogC and fogD are necessary for the formation of the aromatic core and the cyclized PKS products are released as salicyl alcohols. In particular, fogB is responsible for oxidation of a hydroxyl group or reduction of remaining double bond(s) at the C-7 residue whereas fogD is probably involved in the reductive release of the modified PKS products. The cytochrome P450 monooxygenase fogE is then responsible for the hydroxylation at C-3 of the benzene ring. The fogE products are substrates of the prenyltransferase fogH and the prenylated benzyl alcohols are subsequently oxidized by the fogF to produce the final aryl aldehydes flavoglaucin and congeners. The short-chain dehydrogenase fogG does not seem to be involved in the biosynthesis of the prenylated salicylaldehyde derivatives. This chain is Short-chain dehydrogenase fogD, found in Aspergillus ruber (strain CBS 135680).